A 473-amino-acid polypeptide reads, in one-letter code: MAP kinase-activated protein kinase 5 (473 aa).

Positions 22-304 constitute a Protein kinase domain; it reads INWTQKLGAG…IEGVLDHPWL (283 aa). ATP-binding positions include 28–36 and lysine 51; that span reads LGAGISGPV. Serine 115 bears the Phosphoserine; by PKA mark. Aspartate 148 (proton acceptor) is an active-site residue. Position 182 is a phosphothreonine; by MAPK11, MAPK14, MAPK4, MAPK6 and PKA (threonine 182). 2 positions are modified to phosphoserine: serine 212 and serine 354. A coiled-coil region spans residues 409–440; that stretch reads ENEDEKLNEVMQEAWKYNRECKLLRDTLQSFS.

It belongs to the protein kinase superfamily. CAMK Ser/Thr protein kinase family. In terms of assembly, interacts with ERK3/MAPK6 and ERK4/MAPK4 (via FRIEDE motif); the interaction is direct. Interacts with YWHAE; the interaction prevents phosphorylation of HSP27/HSPB1 leading to disrupt F-actin polymerization. Interacts with SQSTM1. Post-translationally, phosphorylated on Thr-182 ERK3/MAPK6 or ERK4/MAPK4; which is the regulatory phosphorylation site and is located on the T-loop/loop 12, leading to activation. Phosphorylation at Thr-182 by p38-alpha/MAPK14, p38-beta/MAPK11 is subject to debate. Phosphorylated at Ser-115 by PKA/PRKACA, leading to localization to the cytoplasm. Autophosphorylated. In terms of tissue distribution, expressed ubiquitously.

Its subcellular location is the cytoplasm. The protein resides in the nucleus. It carries out the reaction L-seryl-[protein] + ATP = O-phospho-L-seryl-[protein] + ADP + H(+). The catalysed reaction is L-threonyl-[protein] + ATP = O-phospho-L-threonyl-[protein] + ADP + H(+). Its activity is regulated as follows. Activated following phosphorylation at Thr-182 by p38-alpha/MAPK14, p38-beta/MAPK11, ERK2/MAPK1, ERK3/MAPK6, and ERK4/MAPK4. Activated by stress-related extracellular stimuli; such as H(2)O(2), arsenite, anisomycin TNF alpha and also PMA and the calcium ionophore A23187; but to a lesser extent. In vitro, activated by SQSTM1. Inhibited by diterpenoid alkaloid noroxoaconitine. Its function is as follows. Tumor suppressor serine/threonine-protein kinase involved in mTORC1 signaling and post-transcriptional regulation. Phosphorylates FOXO3, ERK3/MAPK6, ERK4/MAPK4, HSP27/HSPB1, p53/TP53 and RHEB. Acts as a tumor suppressor by mediating Ras-induced senescence and phosphorylating p53/TP53. Involved in post-transcriptional regulation of MYC by mediating phosphorylation of FOXO3: phosphorylation of FOXO3 leads to promote nuclear localization of FOXO3, enabling expression of miR-34b and miR-34c, 2 post-transcriptional regulators of MYC that bind to the 3'UTR of MYC transcript and prevent MYC translation. Acts as a negative regulator of mTORC1 signaling by mediating phosphorylation and inhibition of RHEB. Part of the atypical MAPK signaling via its interaction with ERK3/MAPK6 or ERK4/MAPK4: the precise role of the complex formed with ERK3/MAPK6 or ERK4/MAPK4 is still unclear, but the complex follows a complex set of phosphorylation events: upon interaction with atypical MAPK (ERK3/MAPK6 or ERK4/MAPK4), ERK3/MAPK6 (or ERK4/MAPK4) is phosphorylated and then mediates phosphorylation and activation of MAPKAPK5, which in turn phosphorylates ERK3/MAPK6 (or ERK4/MAPK4). Mediates phosphorylation of HSP27/HSPB1 in response to PKA/PRKACA stimulation, inducing F-actin rearrangement. The polypeptide is MAP kinase-activated protein kinase 5 (MAPKAPK5) (Homo sapiens (Human)).